A 3391-amino-acid chain; its full sequence is Genome polyprotein (3391 aa).

An interaction with host EXOC1 region spans residues 1 to 15 (MNNQRKKAKNTPFNM). Residues 1 to 101 (MNNQRKKAKN…LNILNRRRRS (101 aa)) are Cytoplasmic-facing. Residues 37 to 72 (MLQGRGPLKLFMALVAFLRFLTIPPTAGILKRWGTI) are hydrophobic; homodimerization of capsid protein C. The propeptide at 101–114 (SAGMIIMLIPTVMA) is ER anchor for the capsid protein C, removed in mature form by serine protease NS3. Residues 102–122 (AGMIIMLIPTVMAFHLTTRNG) traverse the membrane as a helical segment. Residues 123 to 238 (EPHMIVSRQE…GAWKHAQRIE (116 aa)) lie on the Extracellular side of the membrane. Asn183 is a glycosylation site (N-linked (GlcNAc...) asparagine; by host). The chain crosses the membrane as a helical span at residues 239-259 (TWILRHPGFTIMAAILAYTIG). Residues 260-265 (TTHFQR) are Cytoplasmic-facing. A helical membrane pass occupies residues 266-280 (ALIFILLTAVAPSMT). Over 281–725 (MRCIGISNRD…LHQVFGAIYG (445 aa)) the chain is Extracellular. Disulfide bonds link Cys283–Cys310, Cys340–Cys401, Cys354–Cys385, and Cys372–Cys396. A glycan (N-linked (GlcNAc...) asparagine; by host) is linked at Asn347. A fusion peptide region spans residues 378-391 (DRGWGNGCGLFGKG). Residue Asn433 is glycosylated (N-linked (GlcNAc...) asparagine; by host). Cystine bridges form between Cys465–Cys565 and Cys582–Cys613. The helical transmembrane segment at 726 to 746 (AAFSGVSWTMKILIGVIITWI) threads the bilayer. Over 747 to 752 (GMNSRS) the chain is Cytoplasmic. A helical transmembrane segment spans residues 753–773 (TSLSVSLVLVGIVTLYLGVMV). At 774–1195 (QADSGCVVSW…MVGATMTDDI (422 aa)) the chain is on the extracellular side. Intrachain disulfides connect Cys779–Cys790, Cys830–Cys918, Cys954–Cys998, Cys1055–Cys1104, Cys1066–Cys1088, and Cys1087–Cys1091. Asn905 and Asn982 each carry an N-linked (GlcNAc...) asparagine; by host glycan. N-linked (GlcNAc...) asparagine; by host glycosylation occurs at Asn1134. A helical transmembrane segment spans residues 1196 to 1220 (GMGVTYLALLAAFKVRPTFAAGLLL). Residues 1221-1226 (RKLTSK) are Cytoplasmic-facing. A helical transmembrane segment spans residues 1227-1245 (ELMMTTIGIVLLSQSTIPE). Residues 1246–1269 (TILELTDALALGMMVLKMVRNMEK) lie on the Lumenal side of the membrane. A helical membrane pass occupies residues 1270-1290 (YQLAVTIMAILCVPNAVILQN). A topological domain (cytoplasmic) is located at residue Ala1291. A helical transmembrane segment spans residues 1292 to 1310 (WKVSCTILAVVSVSPLLLT). At 1311 to 1317 (SSQQKTD) the chain is on the lumenal side. Residues 1318 to 1338 (WIPLALTIKGLNPTAIFLTTL) form a helical membrane-spanning segment. Topologically, residues 1339–1346 (SRTSKKRS) are cytoplasmic. A helical membrane pass occupies residues 1347 to 1367 (WPLNEAIMAVGMVSILASSLL). Over 1368-1370 (KND) the chain is Lumenal. The helical transmembrane segment at 1371 to 1391 (IPMTGPLVAGGLLTVCYVLTG) threads the bilayer. Residues 1392-1447 (RSADLELERAADVKWEDQAEISGSSPILSITISEDGSMSIKNEEEEQTLTILIRTG) are Cytoplasmic-facing. Residues 1398–1437 (LERAADVKWEDQAEISGSSPILSITISEDGSMSIKNEEEE) form an interacts with and activates NS3 protease region. An intramembrane region (helical) is located at residues 1448–1468 (LLVISGLFPVSIPITAAAWYL). Residues 1469–2147 (WEVKKQRAGV…LSELPETLET (679 aa)) are Cytoplasmic-facing. The region spanning 1476 to 1653 (AGVLWDVPSP…EKSIEDNPEI (178 aa)) is the Peptidase S7 domain. Active-site charge relay system; for serine protease NS3 activity residues include His1526, Asp1550, and Ser1610. In terms of domain architecture, Helicase ATP-binding spans 1655 to 1811 (DDIFRKRRLT…QSNAPIIDEE (157 aa)). Positions 1659–1662 (RKRR) are important for RNA-binding. An ATP-binding site is contributed by 1668–1675 (LHPGAGKT). Residues 1759–1762 (DEAH) carry the DEAH box motif. Residues 1821 to 1988 (SGHEWVTDFK…IIPSMFEPER (168 aa)) enclose the Helicase C-terminal domain. An N6-acetyllysine; by host modification is found at Lys1863. Residues 2148-2168 (LLLLTLLATVTGGIFLFLMSG) traverse the membrane as a helical segment. At 2169–2170 (RG) the chain is on the lumenal side. The segment at residues 2171 to 2191 (IGKMTLGMCCIITASVLLWYA) is an intramembrane region (helical). Gln2192 is a topological domain (lumenal). The chain crosses the membrane as a helical span at residues 2193–2213 (IQPHWIAASIILEFFLIVLLI). At 2214 to 2228 (PEPEKQRTPQDNQLT) the chain is on the cytoplasmic side. A helical membrane pass occupies residues 2229–2249 (YVVIAILTVVAATMANEMGFL). The Lumenal segment spans residues 2250–2274 (EKTKKDLGLGSIATQQPESNILDID). The segment at residues 2275-2295 (LRPASAWTLYAVATTFVTPML) is an intramembrane region (helical). At 2296 to 2316 (RHSIENSSVNVSLTAIANQAT) the chain is on the lumenal side. 2 N-linked (GlcNAc...) asparagine; by host glycosylation sites follow: Asn2301 and Asn2305. The segment at residues 2317-2337 (VLMGLGKGWPLSKMDIGVPLL) is an intramembrane region (helical). Topologically, residues 2338–2347 (AIGCYSQVNP) are lumenal. The helical transmembrane segment at 2348–2368 (ITLTAALLLLVAHYAIIGPGL) threads the bilayer. At 2369–2413 (QAKATREAQKRAAAGIMKNPTVDGITVIDLDPIPYDPKFEKQLGQ) the chain is on the cytoplasmic side. Residues 2414–2434 (VMLLVLCVTQVLMMRTTWALC) traverse the membrane as a helical segment. Residues 2435-2459 (EALTLATGPISTLWEGNPGRFWNTT) lie on the Lumenal side of the membrane. The N-linked (GlcNAc...) asparagine; by host glycan is linked to Asn2457. The helical transmembrane segment at 2460–2480 (IAVSMANIFRGSYLAGAGLLF) threads the bilayer. At 2481–3391 (SIMKNTTNTR…REEEEAGVLW (911 aa)) the chain is on the cytoplasmic side. One can recognise an mRNA cap 0-1 NS5-type MT domain in the interval 2493–2755 (TGNIGETLGE…DVDLGSGTRN (263 aa)). Ser2547 lines the S-adenosyl-L-methionine pocket. At Ser2547 the chain carries Phosphoserine. Lys2552 acts as the For 2'-O-MTase activity in catalysis. An SUMO-interacting motif motif is present at residues 2568–2571 (VVDL). Residues Gly2577, Trp2578, Thr2595, Lys2596, Asp2622, and Val2623 each coordinate S-adenosyl-L-methionine. The active-site For 2'-O-MTase activity is Asp2637. Residue Ile2638 participates in S-adenosyl-L-methionine binding. Residues Lys2672 and Glu2708 each act as for 2'-O-MTase activity in the active site. Tyr2710 contacts S-adenosyl-L-methionine. Glu2929, His2933, Cys2938, and Cys2941 together coordinate Zn(2+). Residues 3020–3169 (AMYADDTAGW…PLDDRFASAL (150 aa)) enclose the RdRp catalytic domain. Zn(2+) contacts are provided by His3203, Cys3219, and Cys3338.

The protein in the N-terminal section; belongs to the class I-like SAM-binding methyltransferase superfamily. mRNA cap 0-1 NS5-type methyltransferase family. Homodimer. Interacts (via N-terminus) with host EXOC1 (via C-terminus); this interaction results in EXOC1 degradation through the proteasome degradation pathway. In terms of assembly, forms heterodimers with envelope protein E in the endoplasmic reticulum and Golgi. As to quaternary structure, homodimer; in the endoplasmic reticulum and Golgi. Interacts with protein prM. Interacts with non-structural protein 1. Homodimer; Homohexamer when secreted. Interacts with envelope protein E. Interacts with host PRKAA1. In terms of assembly, interacts (via N-terminus) with serine protease NS3. As to quaternary structure, forms a heterodimer with serine protease NS3. May form homooligomers. Forms a heterodimer with NS2B. Interacts with NS4B. Interacts with unphosphorylated RNA-directed RNA polymerase NS5; this interaction stimulates RNA-directed RNA polymerase NS5 guanylyltransferase activity. Interacts with host SHFL. In terms of assembly, interacts with host MAVS; this interaction inhibits the synthesis of IFN-beta. Interacts with host SHFL. Interacts with host AUP1; the interaction occurs in the presence of Dengue virus NS4B and induces lipophagy which facilitates production of virus progeny particles. May interact with host SRPRA and SEC61G. As to quaternary structure, interacts with serine protease NS3. Homodimer. Interacts with host STAT2; this interaction inhibits the phosphorylation of the latter, and, when all viral proteins are present (polyprotein), targets STAT2 for degradation. Interacts with serine protease NS3. Interacts with host PAF1 complex; the interaction may prevent the recruitment of the PAF1 complex to interferon-responsive genes, and thus reduces the immune response. Specific enzymatic cleavages in vivo yield mature proteins. Cleavages in the lumen of endoplasmic reticulum are performed by host signal peptidase, whereas cleavages in the cytoplasmic side are performed by serine protease NS3. Signal cleavage at the 2K-4B site requires a prior NS3 protease-mediated cleavage at the 4A-2K site. Post-translationally, cleaved in post-Golgi vesicles by a host furin, releasing the mature small envelope protein M, and peptide pr. This cleavage is incomplete as up to 30% of viral particles still carry uncleaved prM. In terms of processing, N-glycosylated. N-glycosylated. The excreted form is glycosylated and this is required for efficient secretion of the protein from infected cells. Post-translationally, acetylated by host KAT5. Acetylation modulates NS3 RNA-binding and unwinding activities and plays an important positive role for viral replication. In terms of processing, phosphorylated on serines residues. This phosphorylation may trigger NS5 nuclear localization. Sumoylation of RNA-directed RNA polymerase NS5 increases NS5 protein stability allowing proper viral RNA replication.

It localises to the virion. The protein localises to the host nucleus. The protein resides in the host cytoplasm. It is found in the host perinuclear region. Its subcellular location is the secreted. It localises to the virion membrane. The protein localises to the host endoplasmic reticulum membrane. The protein resides in the host mitochondrion. The catalysed reaction is Selective hydrolysis of -Xaa-Xaa-|-Yaa- bonds in which each of the Xaa can be either Arg or Lys and Yaa can be either Ser or Ala.. It carries out the reaction RNA(n) + a ribonucleoside 5'-triphosphate = RNA(n+1) + diphosphate. The enzyme catalyses a ribonucleoside 5'-triphosphate + H2O = a ribonucleoside 5'-diphosphate + phosphate + H(+). It catalyses the reaction ATP + H2O = ADP + phosphate + H(+). The catalysed reaction is a 5'-end (5'-triphosphoguanosine)-ribonucleoside in mRNA + S-adenosyl-L-methionine = a 5'-end (N(7)-methyl 5'-triphosphoguanosine)-ribonucleoside in mRNA + S-adenosyl-L-homocysteine. It carries out the reaction a 5'-end (N(7)-methyl 5'-triphosphoguanosine)-ribonucleoside in mRNA + S-adenosyl-L-methionine = a 5'-end (N(7)-methyl 5'-triphosphoguanosine)-(2'-O-methyl-ribonucleoside) in mRNA + S-adenosyl-L-homocysteine + H(+). Functionally, plays a role in virus budding by binding to the cell membrane and gathering the viral RNA into a nucleocapsid that forms the core of a mature virus particle. During virus entry, may induce genome penetration into the host cytoplasm after hemifusion induced by the surface proteins. Can migrate to the cell nucleus where it modulates host functions. Overcomes the anti-viral effects of host EXOC1 by sequestering and degrading the latter through the proteasome degradation pathway. Inhibits RNA silencing by interfering with host Dicer. Its function is as follows. Prevents premature fusion activity of envelope proteins in trans-Golgi by binding to envelope protein E at pH6.0. After virion release in extracellular space, gets dissociated from E dimers. In terms of biological role, acts as a chaperone for envelope protein E during intracellular virion assembly by masking and inactivating envelope protein E fusion peptide. prM is the only viral peptide matured by host furin in the trans-Golgi network probably to avoid catastrophic activation of the viral fusion activity in acidic Golgi compartment prior to virion release. prM-E cleavage is inefficient, and many virions are only partially matured. These uncleaved prM would play a role in immune evasion. Functionally, may play a role in virus budding. Exerts cytotoxic effects by activating a mitochondrial apoptotic pathway through M ectodomain. May display a viroporin activity. Binds to host cell surface receptor and mediates fusion between viral and cellular membranes. Envelope protein is synthesized in the endoplasmic reticulum in the form of heterodimer with protein prM. They play a role in virion budding in the ER, and the newly formed immature particle is covered with 60 spikes composed of heterodimer between precursor prM and envelope protein E. The virion is transported to the Golgi apparatus where the low pH causes dissociation of PrM-E heterodimers and formation of E homodimers. prM-E cleavage is inefficient, and many virions are only partially matured. These uncleaved prM would play a role in immune evasion. Its function is as follows. Involved in immune evasion, pathogenesis and viral replication. Once cleaved off the polyprotein, is targeted to three destinations: the viral replication cycle, the plasma membrane and the extracellular compartment. Essential for viral replication. Required for formation of the replication complex and recruitment of other non-structural proteins to the ER-derived membrane structures. Excreted as a hexameric lipoparticle that plays a role against host immune response. Antagonizing the complement function. Binds to the host macrophages and dendritic cells. Inhibits signal transduction originating from Toll-like receptor 3 (TLR3). Mediates complement activation, which may contribute to the pathogenesis of the vascular leakage that occurs in severe dengue disease. Activates autophagy through the AMPK/ERK/mTOR signaling pathway. Mechanistically, acts as the assembly platform for STK11-AMPK interactions and promotes STK11-AMPK interactions. In turn, promotes phosphorylation of the AMPK kinase structural domain and activates AMPK, thereby positively regulating the AMPK/ERK/mTOR signaling pathway and inducing autophagy. In terms of biological role, disrupts the host endothelial glycocalyx layer of host pulmonary microvascular endothelial cells, inducing degradation of sialic acid and shedding of heparan sulfate proteoglycans. NS1 induces expression of sialidases, heparanase, and activates cathepsin L, which activates heparanase via enzymatic cleavage. These effects are probably linked to the endothelial hyperpermeability observed in severe dengue disease. Functionally, component of the viral RNA replication complex that functions in virion assembly and antagonizes the host immune response. Required cofactor for the serine protease function of NS3. May have membrane-destabilizing activity and form viroporins. Its function is as follows. Displays three enzymatic activities: serine protease, NTPase and RNA helicase. NS3 serine protease, in association with NS2B, performs its autocleavage and cleaves the polyprotein at dibasic sites in the cytoplasm: C-prM, NS2A-NS2B, NS2B-NS3, NS3-NS4A, NS4A-2K and NS4B-NS5. NS3 RNA helicase binds RNA and unwinds dsRNA in the 3' to 5' direction. In terms of biological role, regulates the ATPase activity of the NS3 helicase activity. NS4A allows NS3 helicase to conserve energy during unwinding. Plays a role in the inhibition of the host innate immune response. Interacts with host MAVS and thereby prevents the interaction between RIGI and MAVS. In turn, IFN-beta production is impaired. Interacts with host AUP1 which mediates induction of lipophagy in host cells and facilitates production of virus progeny particles. Functionally, functions as a signal peptide for NS4B and is required for the interferon antagonism activity of the latter. Induces the formation of ER-derived membrane vesicles where the viral replication takes place. Inhibits interferon (IFN)-induced host STAT1 phosphorylation and nuclear translocation, thereby preventing the establishment of cellular antiviral state by blocking the IFN-alpha/beta pathway. Its function is as follows. Replicates the viral (+) and (-) RNA genome, and performs the capping of genomes in the cytoplasm. NS5 methylates viral RNA cap at guanine N-7 and ribose 2'-O positions. Besides its role in RNA genome replication, also prevents the establishment of cellular antiviral state by blocking the interferon-alpha/beta (IFN-alpha/beta) signaling pathway. Inhibits host TYK2 and STAT2 phosphorylation, thereby preventing activation of JAK-STAT signaling pathway. May reduce immune responses by preventing the recruitment of the host PAF1 complex to interferon-responsive genes. The polypeptide is Genome polyprotein (Aedimorphus (Red guenon)).